We begin with the raw amino-acid sequence, 888 residues long: Pumilio homology domain family member 4 (888 aa).

A phosphothreonine mark is found at T205, T212, and T252. Disordered stretches follow at residues 236 to 270 and 467 to 551; these read KAKK…IPPT and MNSA…RKIE. Residues 243–270 are compositionally biased toward polar residues; that stretch reads GANNTAKTRTQSISFDNTPSSTSFIPPT. At S256 the chain carries Phosphoserine. 2 stretches are compositionally biased toward low complexity: residues 478 to 499 and 521 to 543; these read NNNS…YNNK and NNNN…NSNS. The PUM-HD domain occupies 539–888; sequence TNSNSAEKQR…RIIGMLHLDS (350 aa). Pumilio repeat units follow at residues 563 to 598, 599 to 634, 635 to 671, 672 to 707, 708 to 743, 744 to 783, 784 to 821, and 823 to 861; these read QYIG…AIFE, ETKD…VLTK, ISSP…IVVD, SLRP…FIFD, AISD…NLCD, KLLA…KIVH, LLKP…EILN, and GGET…RLSE.

Is not essential for haploid growth, but may affect diploid formation. This is Pumilio homology domain family member 4 (PUF4) from Saccharomyces cerevisiae (strain ATCC 204508 / S288c) (Baker's yeast).